Reading from the N-terminus, the 98-residue chain is NADH-ubiquinone oxidoreductase chain 4L (98 aa).

A run of 3 helical transmembrane segments spans residues 1 to 21, 26 to 46, and 59 to 79; these read MTPTHFTISSAFLLGMMGLAF, LLSALLCLEAMMLALFIALSL, and APMLMLAFSACEASAGLALLV.

The protein belongs to the complex I subunit 4L family.

Its subcellular location is the mitochondrion membrane. The enzyme catalyses a ubiquinone + NADH + 5 H(+)(in) = a ubiquinol + NAD(+) + 4 H(+)(out). Functionally, core subunit of the mitochondrial membrane respiratory chain NADH dehydrogenase (Complex I) which catalyzes electron transfer from NADH through the respiratory chain, using ubiquinone as an electron acceptor. Part of the enzyme membrane arm which is embedded in the lipid bilayer and involved in proton translocation. The chain is NADH-ubiquinone oxidoreductase chain 4L (MT-ND4L) from Gadus morhua (Atlantic cod).